We begin with the raw amino-acid sequence, 1295 residues long: DNA-directed RNA polymerase subunit beta' (1295 aa).

Zn(2+)-binding residues include Cys66, Cys68, Cys81, and Cys84. Mg(2+)-binding residues include Asp562, Asp564, and Asp566. Residues Cys901, Cys975, Cys982, and Cys985 each coordinate Zn(2+).

It belongs to the RNA polymerase beta' chain family. As to quaternary structure, the RNAP catalytic core consists of 2 alpha, 1 beta, 1 beta' and 1 omega subunit. When a sigma factor is associated with the core the holoenzyme is formed, which can initiate transcription. It depends on Mg(2+) as a cofactor. Zn(2+) is required as a cofactor.

It carries out the reaction RNA(n) + a ribonucleoside 5'-triphosphate = RNA(n+1) + diphosphate. Its function is as follows. DNA-dependent RNA polymerase catalyzes the transcription of DNA into RNA using the four ribonucleoside triphosphates as substrates. The polypeptide is DNA-directed RNA polymerase subunit beta' (Rubrobacter xylanophilus (strain DSM 9941 / JCM 11954 / NBRC 16129 / PRD-1)).